The primary structure comprises 309 residues: UPF0282 protein Saci_0277 (309 aa).

This sequence belongs to the UPF0282 family.

This is UPF0282 protein Saci_0277 from Sulfolobus acidocaldarius (strain ATCC 33909 / DSM 639 / JCM 8929 / NBRC 15157 / NCIMB 11770).